The chain runs to 321 residues: Ribosomal RNA small subunit methyltransferase H (321 aa).

Residues 34–36 (GGH), Asp-54, Phe-80, Asp-102, and Gln-109 contribute to the S-adenosyl-L-methionine site.

Belongs to the methyltransferase superfamily. RsmH family.

The protein resides in the cytoplasm. It carries out the reaction cytidine(1402) in 16S rRNA + S-adenosyl-L-methionine = N(4)-methylcytidine(1402) in 16S rRNA + S-adenosyl-L-homocysteine + H(+). Its function is as follows. Specifically methylates the N4 position of cytidine in position 1402 (C1402) of 16S rRNA. The polypeptide is Ribosomal RNA small subunit methyltransferase H (Blochmanniella floridana).